Here is a 97-residue protein sequence, read N- to C-terminus: Putative membrane protein insertion efficiency factor (97 aa).

A disordered region spans residues 77-97 (VPDAPASPSPSSSCSCKGPHP). The span at 85–97 (SPSSSCSCKGPHP) shows a compositional bias: low complexity.

It belongs to the UPF0161 family.

Its subcellular location is the cell inner membrane. Could be involved in insertion of integral membrane proteins into the membrane. In Xanthomonas euvesicatoria pv. vesicatoria (strain 85-10) (Xanthomonas campestris pv. vesicatoria), this protein is Putative membrane protein insertion efficiency factor.